The sequence spans 594 residues: UvrABC system protein C (594 aa).

Residues 14-91 (DQPGCYLMKD…IKKHDPKYNI (78 aa)) enclose the GIY-YIG domain. Residues 196 to 231 (KEVRSELETKMYEASEKLEFERAKELRDQIAHIDAI) form the UVR domain.

The protein belongs to the UvrC family. As to quaternary structure, interacts with UvrB in an incision complex.

The protein localises to the cytoplasm. Its function is as follows. The UvrABC repair system catalyzes the recognition and processing of DNA lesions. UvrC both incises the 5' and 3' sides of the lesion. The N-terminal half is responsible for the 3' incision and the C-terminal half is responsible for the 5' incision. The chain is UvrABC system protein C from Bacillus anthracis (strain A0248).